The sequence spans 80 residues: UPF0125 protein XF_2346 (80 aa).

Belongs to the UPF0125 (RnfH) family.

The sequence is that of UPF0125 protein XF_2346 from Xylella fastidiosa (strain 9a5c).